Here is a 623-residue protein sequence, read N- to C-terminus: Methionine--tRNA ligase (623 aa).

A 'HIGH' region motif is present at residues 11–21; it reads PYANGPRHIGH. Zn(2+) is bound by residues Cys143, Cys146, Cys156, and Cys159. Positions 347–351 match the 'KMSKS' region motif; sequence KFSSS. Ser350 is a binding site for ATP.

It belongs to the class-I aminoacyl-tRNA synthetase family. MetG type 1 subfamily. Monomer. It depends on Zn(2+) as a cofactor.

It localises to the cytoplasm. It catalyses the reaction tRNA(Met) + L-methionine + ATP = L-methionyl-tRNA(Met) + AMP + diphosphate. Its function is as follows. Is required not only for elongation of protein synthesis but also for the initiation of all mRNA translation through initiator tRNA(fMet) aminoacylation. This is Methionine--tRNA ligase from Bifidobacterium animalis subsp. lactis (strain AD011).